A 471-amino-acid polypeptide reads, in one-letter code: Putative multidrug resistance protein MdtD (471 aa).

Residues 1–11 (MTDLPDSTRWQ) lie on the Periplasmic side of the membrane. Residues 12–32 (LWIVAFGFFMQSLDTTIVNTA) traverse the membrane as a helical segment. The Cytoplasmic segment spans residues 33 to 48 (LPSMAQSLGESPLHMH). The helical transmembrane segment at 49–69 (MVIVSYVLTVAVMLPASGWLA) threads the bilayer. The Periplasmic segment spans residues 70-76 (DKVGVRN). A helical transmembrane segment spans residues 77-97 (IFFTAIVLFTLGSLFCALSGT). Residues 98 to 101 (LNEL) are Cytoplasmic-facing. A helical transmembrane segment spans residues 102 to 124 (LLARALQGVGGAMMVPVGRLTVM). At 125–137 (KIVPREQYMAAMT) the chain is on the periplasmic side. The chain crosses the membrane as a helical span at residues 138–158 (FVTLPGQVGPLLGPALGGLLV). Over 159-164 (EYASWH) the chain is Cytoplasmic. Residues 165-185 (WIFLINIPVGIIGAIATLLLM) traverse the membrane as a helical segment. Over 186-196 (PNYTMQTWRFD) the chain is Periplasmic. The chain crosses the membrane as a helical span at residues 197 to 217 (LSGFLLLAVGMAVLTLALDGS). Topologically, residues 218 to 224 (KGTGLSP) are cytoplasmic. The chain crosses the membrane as a helical span at residues 225 to 245 (LAIAGLVAVGVVALVLYLLHA). Residues 246 to 262 (RNNNRALFSLKLFRTRT) lie on the Periplasmic side of the membrane. The helical transmembrane segment at 263–283 (FSLGLAGSFAGRIGSGMLPFM) threads the bilayer. The Cytoplasmic segment spans residues 284 to 285 (TP). Residues 286–306 (VFLQIGLGFSPFHAGLMMIPM) traverse the membrane as a helical segment. Over 307-341 (VLGSMGMKRIVVQVVNRFGYRRVLVATTLGLSLVT) the chain is Periplasmic. The chain crosses the membrane as a helical span at residues 342–362 (LLFMTTALLGWYYVLPFVLFL). Residues 363 to 395 (QGMVNSTRFSSMNTLTLKDLPDNLASSGNSLLS) lie on the Cytoplasmic side of the membrane. The chain crosses the membrane as a helical span at residues 396 to 416 (MIMQLSMSIGVTIAGLLLGLF). The Periplasmic segment spans residues 417–430 (GSQHVSVDSGTTQT). A helical membrane pass occupies residues 431 to 451 (VFMYTWLSMALIIALPAFIFA). At 452-471 (RVPNDTHQNVAISRRKRSAQ) the chain is on the cytoplasmic side.

The protein belongs to the major facilitator superfamily. TCR/Tet family.

It localises to the cell inner membrane. This chain is Putative multidrug resistance protein MdtD, found in Shigella boydii serotype 4 (strain Sb227).